Consider the following 352-residue polypeptide: AP2/ERF and B3 domain-containing transcription factor At1g51120 (352 aa).

The disordered stretch occupies residues 1-20 (MDEMSNVAKTTTETSGLTDS). Residues 7–20 (VAKTTTETSGLTDS) are compositionally biased toward polar residues. Positions 46 to 103 (KFKGVVQQQNGHWGAQIYADHRRIWLGTFKSAHEAAAAYDSASIKLRSFDANSHRNFP) form a DNA-binding region, AP2/ERF. Residues 178–297 (FQKELTPSDV…KTFLMIDVHH (120 aa)) constitute a DNA-binding region (TF-B3).

The protein belongs to the AP2/ERF transcription factor family. RAV subfamily.

It is found in the nucleus. In terms of biological role, probably acts as a transcriptional activator. Binds to the GCC-box pathogenesis-related promoter element. May be involved in the regulation of gene expression by stress factors and by components of stress signal transduction pathways. The sequence is that of AP2/ERF and B3 domain-containing transcription factor At1g51120 from Arabidopsis thaliana (Mouse-ear cress).